A 509-amino-acid chain; its full sequence is ATP synthase subunit beta, mitochondrial (509 aa).

The transit peptide at 1–32 directs the protein to the mitochondrion; the sequence is MVLPRLIPRLSRSAFKVAQANNRVFNAPFRGM. Position 189–196 (189–196) interacts with ATP; that stretch reads GAGVGKTV.

F-type ATP synthases have 2 components, the catalytic core F(1) and the membrane-embedded component F(0), linked together by a central stalk and a peripheral stalk. The central stalk, also called rotor shaft, is often seen as part of F(1). The peripheral stalk is seen as part of F(0). F(0) contains the membrane channel next to the rotor. F-type ATP synthases form dimers but each monomer functions independently in ATP generation. The dimer consists of 17 different polypeptides: ATP1 (subunit alpha, 3 molecules per monomer, part of F(1)), ATP2 (subunit beta, 3 copies per monomer, part of F(1)), ATP3 (subunit gamma, part of the central stalk), ATP4 (subunit b, part of the peripheral stalk), ATP5/OSCP (subunit 5/OSCP, part of the peripheral stalk), ATP6 (subunit a, part of the peripheral stalk), ATP7 (subunit d, part of the peripheral stalk), ATP8 (subunit 8, part of the peripheral stalk), OLI1 (subunit c, part of the rotor, 10 molecules per monomer), ATP14 (subunit h, part of the peripheral stalk), ATP15 (subunit epsilon, part of the central stalk), ATP16 (subunit delta, part of the central stalk), ATP17 (subunit f, part of the peripheral stalk), ATP18 (subunit i/j, part of the peripheral stalk), ATP19 (subunit k, dimer-specific, at interface between monomers), ATP20 (subunit g, at interface between monomers), TIM11 (subunit e, at interface between monomers).

It localises to the mitochondrion inner membrane. It carries out the reaction ATP + H2O + 4 H(+)(in) = ADP + phosphate + 5 H(+)(out). Functionally, mitochondrial membrane ATP synthase (F(1)F(0) ATP synthase or Complex V) produces ATP from ADP in the presence of a proton gradient across the membrane which is generated by electron transport complexes of the respiratory chain. F-type ATP synthases consist of two structural domains, F(1) - containing the extramembraneous catalytic core, and F(0) - containing the membrane proton channel, linked together by a central stalk and a peripheral stalk. During catalysis, ATP synthesis in the catalytic domain of F(1) is coupled via a rotary mechanism of the central stalk subunits to proton translocation. Subunits alpha/ATP1 and beta/ATP2 form the catalytic core in F(1). Rotation of the central stalk against the surrounding alpha/ATP1(3)beta/ATP2(3) subunits leads to hydrolysis of ATP in three separate catalytic sites on the beta/ATP2 subunits. This chain is ATP synthase subunit beta, mitochondrial, found in Yarrowia lipolytica (strain CLIB 122 / E 150) (Yeast).